A 27-amino-acid chain; its full sequence is Fructokinase (27 aa).

This sequence belongs to the ROK (NagC/XylR) family. In terms of assembly, homodimer. The cofactor is Mg(2+).

It carries out the reaction D-fructose + ATP = D-fructose 6-phosphate + ADP + H(+). With respect to regulation, inhibition by zinc ions. In Fusobacterium mortiferum, this protein is Fructokinase.